The sequence spans 834 residues: Enhancer of filamentation 1 (834 aa).

Residues 3–65 enclose the SH3 domain; it reads ARNLMARALY…PGNRVKLLIG (63 aa). Phosphotyrosine occurs at positions 92, 164, 166, 177, 189, 214, and 223. S296 is modified (phosphoserine). Y317 is subject to Phosphotyrosine. Disordered stretches follow at residues 328-402 and 584-624; these read PPAE…DKRL and SQMP…SERS. Over residues 332–344 the composition is skewed to basic and acidic residues; the sequence is TSEKANPEERDGV. The Caspase cleavage related site signature appears at 360–363; it reads DVVD. The segment covering 368-397 has biased composition (low complexity); it reads LSFSSTGSTRSNMSTSSTTSKESSVSASPS. S369 is subject to Phosphoserine. The interval 710-760 is divergent helix-loop-helix motif; the sequence is FYYDQCETHYISLLNAIDALFSCVSSAQPPRIFVAHSKFVILSAHKLVFIG. The segment at 710-834 is required for interaction with PLK1; the sequence is FYYDQCETHY…KRSLLEMATF (125 aa). The residue at position 780 (S780) is a Phosphoserine. Phosphothreonine is present on T804.

Belongs to the CAS family. Homodimer. Forms heterodimers with BCAR1/p130cas. Forms complexes with PTK2B/RAFTK, adapter protein CRKL and LYN kinase. Part of a complex composed of NEDD9, AURKA and CTTN; within the complex NEDD9 acts as a scaffold protein and is required for complex formation. Part of a ternary complex composed of SMAD3, ITCH/AIP4 and NEDD9/HEF1; within the complex NEDD9/HEF1 interacts (via N-terminus) with ITCH/AIP4; the complex mediates ubiquitination and proteasomal degradation of NEDD9/HEF1. Interacts with ID2. Interacts with CTTN (via N-terminus). Interacts with MICAL. Interacts with TXNL4/DIM1. Interacts with BCAR3 (via Ras-GEF domain). Interacts with SH2D3C isoform 1 and isoform 2. Interacts with BCAR3. Interacts with ECT2. Interacts with PTPN11/SHP-2 (via SH2 domains); the interaction is enhanced when NEDD9/CAS-L is tyrosine phosphorylated. Interacts (via C-terminus) with PLK1 (via polo box domain). Interacts with NKX2-5. Interacts with SMAD3; the interaction is inhibited by oxidation of NEDD9. Interacts with ABL1; interaction is induced by CXCL12-mediated phosphorylation of NEDD/HEF1. Interacts (via SH3 domain) with PTK2/FAK. Interacts with FYN; in the presence of PTK2. Interacts with INPPL1/SHIP2. Polyubiquitinated by ITCH/AIP4, leading to proteasomal degradation. Post-translationally, PTK2/FAK1 phosphorylates the protein at the YDYVHL motif (conserved among all cas proteins) following integrin stimulation. The SRC family kinases (FYN, SRC, LCK and CRK) are recruited to the phosphorylated sites and can phosphorylate other tyrosine residues. Ligation of either integrin beta-1 or B-cell antigen receptor on tonsillar B-cells and B-cell lines promotes tyrosine phosphorylation and both integrin and BCR-mediated tyrosine phosphorylation requires an intact actin network. Phosphorylation is required to recruit NEDD9 to T-cell receptor microclusters at the periphery of newly formed immunological synapses. In fibroblasts transformation with oncogene v-ABL results in an increase in tyrosine phosphorylation. Transiently phosphorylated following CD3 cross-linking and this phosphorylated form binds to CRKL and C3G. A mutant lacking the SH3 domain is phosphorylated upon CD3 cross-linking but not upon integrin beta-1 cross-linking. Tyrosine phosphorylation occurs upon stimulation of the G-protein coupled C1a calcitonin receptor. Calcitonin-stimulated tyrosine phosphorylation is mediated by calcium- and protein kinase C-dependent mechanisms and requires the integrity of the actin cytoskeleton. Phosphorylation at Ser-369 induces proteasomal degradation. Phosphorylated by LYN. Phosphorylation at Ser-780 by CSNK1D or CSNK1E, or phosphorylation of Thr-804 by CSNK1E enhances the interaction of NEDD9 with PLK1.

The protein localises to the cytoplasm. It localises to the cell cortex. It is found in the nucleus. Its subcellular location is the golgi apparatus. The protein resides in the cell projection. The protein localises to the lamellipodium. It localises to the cell junction. It is found in the focal adhesion. Its subcellular location is the cytoskeleton. The protein resides in the spindle pole. The protein localises to the cilium. It localises to the cilium basal body. It is found in the basolateral cell membrane. Functionally, negatively regulates embryonic fibroblast migration. May play an important role in integrin beta-1 or B cell antigen receptor (BCR) mediated signaling in B- and T-cells. Integrin beta-1 stimulation leads to recruitment of various proteins including CRKl and SHPTP2 to the tyrosine phosphorylated form. Promotes adhesion and migration of lymphocytes; as a result required for the correct migration of lymphocytes to the spleen and other secondary lymphoid organs. Plays a role in the organization of T-cell F-actin cortical cytoskeleton and the centralization of T-cell receptor microclusters at the immunological synapse. Negatively regulates cilia outgrowth in polarized cysts. Modulates cilia disassembly via activation of AURKA-mediated phosphorylation of HDAC6 and subsequent deacetylation of alpha-tubulin. In conjunction with NKX2-5, positively regulates transcription of genes such as COL3A1 and MMP2, resulting in increased pulmonary endothelial fibrosis in response to hypoxia. Positively regulates RANKL-induced osteoclastogenesis. Required for the maintenance of hippocampal dendritic spines in the dentate gyrus and CA1 regions, thereby involved in spatial learning and memory. The polypeptide is Enhancer of filamentation 1 (Canis lupus familiaris (Dog)).